The following is a 490-amino-acid chain: MVPVVALVGRPNVGKSTLFNRLTRTRDALVADFPGLTRDRKYGRAEIEGREFICIDTGGIDGTEDGVETRMAEQSLLAIEEADVVLFMVDARAGLMPADEAIAKHLRSREKPTFLVANKTDGLDPDQAVVDFYALGLGEIYPIAASHGRGVLSLLEHVLLPWMEDLAPQEEVDEDAEYWAQFEAEENGEEEEEDDFDPQSLPIKLAIVGRPNVGKSTLTNRILGEERVVVYDMPGTTRDSIYIPMERDGREYVLIDTAGVRKRGKITDAVEKFSVIKTLQAIEDANVVMLVIDAREGISDQDLSLLGFILNSGRSLVIVVNKWDGLSQEVKEQVKETLDFRLGFIDFARVHFISALHGSGVGNLFESVREAYDSSTRRVGTSMLTRIMTMAVEDHQPPLVRGRRVKLKYAHAGGYNPPIVVIHGNQVKDLSDSYKRYLMNYFRKSLDVMGSPIRIQFKEGENPYANKRNTLTPTQMRKRKRLMKHIKKSK.

2 EngA-type G domains span residues 3–166 and 203–376; these read PVVA…MEDL and IKLA…DSST. Residues 9–16, 56–60, 118–121, 209–216, 256–260, and 321–324 contribute to the GTP site; these read GRPNVGKS, DTGGI, NKTD, DTAGV, and NKWD. The KH-like domain occupies 377-461; that stretch reads RRVGTSMLTR…PIRIQFKEGE (85 aa).

It belongs to the TRAFAC class TrmE-Era-EngA-EngB-Septin-like GTPase superfamily. EngA (Der) GTPase family. In terms of assembly, associates with the 50S ribosomal subunit.

Its function is as follows. GTPase that plays an essential role in the late steps of ribosome biogenesis. The chain is GTPase Der from Escherichia coli O127:H6 (strain E2348/69 / EPEC).